A 154-amino-acid chain; its full sequence is Protein E6 (154 aa).

Zinc fingers lie at residues 30–66 and 103–139; these read CVFC…CPRC and CCKC…CLHC.

This sequence belongs to the papillomaviridae E6 protein family. In terms of assembly, forms homodimers. Interacts with ubiquitin-protein ligase UBE3A/E6-AP; this interaction stimulates UBE3A ubiquitin activity. Interacts with host TP53 and EP300; this interaction inhibits TP53 activity.

It is found in the host cytoplasm. It localises to the host nucleus. In terms of biological role, plays a major role in the induction and maintenance of cellular transformation. E6 associates with host UBE3A/E6-AP ubiquitin-protein ligase and modulates its activity. Sequesters tumor suppressor TP53 in the host cytoplasm and modulates its activity by interacting with host EP300 that results in the reduction of TP53 acetylation and activation. In turn, apoptosis induced by DNA damage is inhibited. E6 also protects host keratinocytes from apoptosis by mediating the degradation of host BAK1. May also inhibit host immune response. The chain is Protein E6 from Homo sapiens (Human).